The sequence spans 304 residues: Homoserine O-acetyltransferase (304 aa).

C142 functions as the Acyl-thioester intermediate in the catalytic mechanism. Substrate is bound by residues K163 and S191. The active-site Proton acceptor is H234. E236 is an active-site residue. R248 is a substrate binding site.

The protein belongs to the MetA family.

Its subcellular location is the cytoplasm. The enzyme catalyses L-homoserine + acetyl-CoA = O-acetyl-L-homoserine + CoA. It participates in amino-acid biosynthesis; L-methionine biosynthesis via de novo pathway; O-acetyl-L-homoserine from L-homoserine: step 1/1. Functionally, transfers an acetyl group from acetyl-CoA to L-homoserine, forming acetyl-L-homoserine. In Thermotoga neapolitana (strain ATCC 49049 / DSM 4359 / NBRC 107923 / NS-E), this protein is Homoserine O-acetyltransferase.